Reading from the N-terminus, the 294-residue chain is S-adenosylmethionine uptake transporter (294 aa).

10 helical membrane-spanning segments follow: residues 8–28 (YLTG…NDVI), 41–61 (VAFF…VYYG), 74–91 (ILRG…TYGL), 98–118 (TATV…VFFL), 121–141 (NIIW…VVTL), 148–168 (FNPE…LDII), 177–197 (SMIS…LPVA), 207–227 (FELA…FFLL), 237–257 (ATAP…YFIF), and 260–280 (FPDK…LFII). EamA domains lie at 21–141 (SSSA…VVTL) and 160–280 (ISFA…LFII).

This sequence belongs to the drug/metabolite transporter (DMT) superfamily. 10 TMS drug/metabolite exporter (DME) (TC 2.A.7.3) family.

Its subcellular location is the cell inner membrane. Transports S-adenosylmethionine. This is S-adenosylmethionine uptake transporter (sam) from Rickettsia conorii (strain ATCC VR-613 / Malish 7).